The following is a 1117-amino-acid chain: Cytospin-A (1117 aa).

Disordered regions lie at residues 1–176, 293–323, and 358–390; these read MKKA…NQIS, SLSPEITPGNQSDGGGTLTSSVEGSAPGSVE, and SSDDALDAPSSSESEGIPSIERSRKGSSGNASE. Low complexity predominate over residues 45–90; the sequence is TAASLSKTKSSDDLLAGMAGGVTVTNGVKGKKSTCPSAAPSASAPA. Residues 93 to 117 show a composition bias toward polar residues; that stretch reads TVENKSKISTGTASSTKRNTSTGNK. 2 stretches are compositionally biased toward basic and acidic residues: residues 120–131 and 158–171; these read SSTRERLRERTR and TATECDVRMSKSKS. Positions 168–280 form a coiled coil; it reads KSKSDNQISD…LNALGFSLEQ (113 aa). Polar residues predominate over residues 293–303; sequence SLSPEITPGNQ. A compositionally biased stretch (low complexity) spans 358 to 377; sequence SSDDALDAPSSSESEGIPSI. S384, S385, and S389 each carry phosphoserine. Coiled-coil stretches lie at residues 394-449 and 487-807; these read ACLT…MESL and RYME…RGRV. Residues S868, S881, and S887 each carry the phosphoserine modification. Residues 919–1001 are disordered; sequence RTSSASRPAS…SRIREERKDP (83 aa). The span at 946-956 shows a compositional bias: basic and acidic residues; sequence RSSEEMKRDIS. Over residues 971 to 990 the composition is skewed to low complexity; the sequence is TTSPQLSLSSSPTASVTPTT. The Calponin-homology (CH) domain maps to 1011-1116; the sequence is GSKRNALLKW…YVTAIYKYFE (106 aa).

It belongs to the cytospin-A family. In terms of assembly, may interact with both microtubules and actin cytoskeleton.

It is found in the cytoplasm. Its subcellular location is the cytoskeleton. The protein resides in the spindle. It localises to the cell junction. The protein localises to the gap junction. Its function is as follows. Involved in cytokinesis and spindle organization. May play a role in actin cytoskeleton organization and microtubule stabilization and hence required for proper cell adhesion and migration. The polypeptide is Cytospin-A (SPECC1L) (Pan troglodytes (Chimpanzee)).